The sequence spans 60 residues: MKNTILILFTAFIALLGFFGMSAEALADPLAEPLADPNAEADPEALKLKSIVSWAKKVLG.

Positions 1–27 are cleaved as a signal peptide; it reads MKNTILILFTAFIALLGFFGMSAEALA. AXPX repeat units lie at residues 27 to 30, 31 to 34, 35 to 38, and 41 to 44; these read ADPL, AEPL, ADPN, and ADPE. A propeptide spanning residues 28 to 45 is cleaved from the precursor; that stretch reads DPLAEPLADPNAEADPEA. Leu-59 is modified (leucine amide).

This sequence belongs to the MCD family. Mastoparan subfamily. Expressed by the venom gland.

Its subcellular location is the secreted. It localises to the target cell membrane. Its function is as follows. Antimicrobial and mast cell degranulating peptide. Has broad spectrum antibacterial activity against both Gram-positive (S.aureus MIC=96-128 ug/ml, S.xylosus MIC=2 ug/ml, S.alactolyticus MIC=32 ug/ml, and S.choleraesuis MIC=32 ug/ml) and Gram-negative bacteria (C.koseri MIC=6 ug/ml, E.coli MIC=3-16 ug/ml, K.pneumoniae MIC=128 ug/ml, P.aerugiosa MIC=128 ug/ml, S.typhimurium MIC=64 ug/ml, V.parahamelytics MIC=32 ug/ml, and S.enterica), as well as on fungi (C.albicans, C.glabrata, and C.neoformans). Does not show antimicrobial activity against S.mutans. Affects membrane permeability of E.coli. Also acts as a mast cell degranulating peptide, that causes liberation of histamine from rat peritoneal mast cells. Its mast cell degranulation activity may be related to the activation of G-protein coupled receptors in mast cells as well as interaction with other proteins located in cell endosomal membranes in the mast cells. Whether this peptide shows hemolytic activities is controversial, as Lin et al., 2011 and Ho et al., 1991 found a hemolytic activity on sheep, chicken and human erythrocytes, whereas Kim et al., 2016 found no hemolytic activity on human erythrocytes. In vivo, induces edema in the rat paw. This Vespa basalis (Hornet) protein is Mastoparan-B.